The following is a 318-amino-acid chain: Nucleotide-binding protein Jann_0539 (318 aa).

17–24 (GPSGAGRS) contacts ATP. 64–67 (DPRT) provides a ligand contact to GTP. The interval 278–318 (GWQVSKRHRDVDKDASENSDRDRGASARTAASTDDGEAEQP) is disordered. Residues 286-302 (RDVDKDASENSDRDRGA) are compositionally biased toward basic and acidic residues.

It belongs to the RapZ-like family.

Functionally, displays ATPase and GTPase activities. This chain is Nucleotide-binding protein Jann_0539, found in Jannaschia sp. (strain CCS1).